The sequence spans 294 residues: Probable 2-(5''-triphosphoribosyl)-3'-dephosphocoenzyme-A synthase (294 aa).

This sequence belongs to the CitG/MdcB family.

It catalyses the reaction 3'-dephospho-CoA + ATP = 2'-(5''-triphospho-alpha-D-ribosyl)-3'-dephospho-CoA + adenine. The protein is Probable 2-(5''-triphosphoribosyl)-3'-dephosphocoenzyme-A synthase of Streptococcus equi subsp. zooepidemicus (strain MGCS10565).